The following is a 358-amino-acid chain: MKFSTIALPLLASAALAQTNSSHSGTNATSHNSTVPNENSKTTIVVTNDDSWASANIRAFYDELKKEGYNVFMFAPALQQSGTGGTFVLPKNTTLAKGAEWGSAPVGAPAWGQDEKDDHIWYFDGTPGAAVTFGFDYALPKFHNNITVDLVVSGPNEGWNLGPFVYTLSGTEGAMYTSVLRGVPAIAFSGENKHTYYANASNSETASHNIYAKASTAIVKNLLKNAKGRPSVLPYGVGLSVNLPLVGDIDPTGKCTDPKPIFTRQTGRGAITDKLVFNETTGLFKYGDIKSDATKACLNGDCFLPDETDVINNWGCYSSISVVSTDYDAPGALAAEAQFLNRGLVEFAPTGYGSFPGN.

Residues 1–17 (MKFSTIALPLLASAALA) form the signal peptide. Residues Asn-20, Asn-27, and Asn-32 are each glycosylated (N-linked (GlcNAc...) asparagine). The tract at residues 21–41 (SSHSGTNATSHNSTVPNENSK) is disordered. Positions 49, 50, and 81 each coordinate Mg(2+). Asn-92 and Asn-145 each carry an N-linked (GlcNAc...) asparagine glycan. Asn-156 lines the Mg(2+) pocket. Ser-189 is an active-site residue. Asn-199 and Asn-278 each carry an N-linked (GlcNAc...) asparagine glycan.

This sequence belongs to the SurE nucleotidase family. Requires Mg(2+) as cofactor.

The protein resides in the secreted. The enzyme catalyses a phosphate monoester + H2O = an alcohol + phosphate. In terms of biological role, probably serves to scavenge phosphorus for growing cells. The protein is Acid phosphatase (PHO2) of Yarrowia lipolytica (strain CLIB 122 / E 150) (Yeast).